Reading from the N-terminus, the 336-residue chain is tRNA N6-adenosine threonylcarbamoyltransferase (336 aa).

Residues His111 and His115 each coordinate Fe cation. Substrate is bound by residues 134 to 138 (LVSGG), Asp167, Gly180, and Asn270. Asp298 serves as a coordination point for Fe cation.

The protein belongs to the KAE1 / TsaD family. The cofactor is Fe(2+).

The protein localises to the cytoplasm. It catalyses the reaction L-threonylcarbamoyladenylate + adenosine(37) in tRNA = N(6)-L-threonylcarbamoyladenosine(37) in tRNA + AMP + H(+). Required for the formation of a threonylcarbamoyl group on adenosine at position 37 (t(6)A37) in tRNAs that read codons beginning with adenine. Is involved in the transfer of the threonylcarbamoyl moiety of threonylcarbamoyl-AMP (TC-AMP) to the N6 group of A37, together with TsaE and TsaB. TsaD likely plays a direct catalytic role in this reaction. This is tRNA N6-adenosine threonylcarbamoyltransferase from Acinetobacter baumannii (strain AB307-0294).